Here is a 189-residue protein sequence, read N- to C-terminus: Peptidyl-tRNA hydrolase (189 aa).

Position 14 (Tyr-14) interacts with tRNA. The active-site Proton acceptor is the His-19. TRNA is bound by residues Phe-64, Asn-66, and Asn-112.

This sequence belongs to the PTH family. As to quaternary structure, monomer.

It is found in the cytoplasm. The enzyme catalyses an N-acyl-L-alpha-aminoacyl-tRNA + H2O = an N-acyl-L-amino acid + a tRNA + H(+). Hydrolyzes ribosome-free peptidyl-tRNAs (with 1 or more amino acids incorporated), which drop off the ribosome during protein synthesis, or as a result of ribosome stalling. Its function is as follows. Catalyzes the release of premature peptidyl moieties from peptidyl-tRNA molecules trapped in stalled 50S ribosomal subunits, and thus maintains levels of free tRNAs and 50S ribosomes. The protein is Peptidyl-tRNA hydrolase of Rhizorhabdus wittichii (strain DSM 6014 / CCUG 31198 / JCM 15750 / NBRC 105917 / EY 4224 / RW1) (Sphingomonas wittichii).